The sequence spans 473 residues: Maltose fermentation regulatory protein MAL63 (473 aa).

Positions 8 to 34 form a DNA-binding region, zn(2)-C6 fungal-type; the sequence is CDCCRVRRVKCDRNKPCNRCIQRNLNC. The Nuclear localization signal motif lies at 41 to 49; that stretch reads KKRGPKSIR.

Belongs to the MAL13 family.

It localises to the nucleus. Regulates the coordinate transcription of structural MAL6S (maltase) and MAL6T (maltose permease) genes. This is Maltose fermentation regulatory protein MAL63 (MAL63) from Saccharomyces cerevisiae (Baker's yeast).